A 213-amino-acid chain; its full sequence is Pyrrolidone-carboxylate peptidase (213 aa).

Residues Glu-80, Cys-143, and His-165 contribute to the active site.

This sequence belongs to the peptidase C15 family. Homotetramer.

The protein localises to the cytoplasm. It catalyses the reaction Release of an N-terminal pyroglutamyl group from a polypeptide, the second amino acid generally not being Pro.. In terms of biological role, removes 5-oxoproline from various penultimate amino acid residues except L-proline. This Erwinia tasmaniensis (strain DSM 17950 / CFBP 7177 / CIP 109463 / NCPPB 4357 / Et1/99) protein is Pyrrolidone-carboxylate peptidase.